Reading from the N-terminus, the 216-residue chain is Probable csgAB operon transcriptional regulatory protein (216 aa).

In terms of domain architecture, HTH luxR-type spans 149–214 (NSTESALLTH…QAVSWANDNL (66 aa)). A DNA-binding region (H-T-H motif) is located at residues 173 to 192 (NNEIARSLFISENTVKTHLY).

Its function is as follows. The master regulator for adhesive curli fimbriae expression; necessary for transcription of the csgAB operon. Plays a positive role in biofilm formation. In Salmonella typhimurium (strain LT2 / SGSC1412 / ATCC 700720), this protein is Probable csgAB operon transcriptional regulatory protein.